Reading from the N-terminus, the 311-residue chain is Beta-lactamase (311 aa).

The tat-type signal signal peptide spans 1–36 (MRKPTSSLTRRSVLGAGLGLGGALALGSTTASAASA). Ser-86 (acyl-ester intermediate) is an active-site residue. 252–254 (KSG) contacts substrate.

Belongs to the class-A beta-lactamase family. Predicted to be exported by the Tat system. The position of the signal peptide cleavage has not been experimentally proven.

The catalysed reaction is a beta-lactam + H2O = a substituted beta-amino acid. In terms of biological role, hydrolyzes benzylpenicillin and cloxacillin (at 10% of the rate of benzylpenicillin). The polypeptide is Beta-lactamase (bla) (Streptomyces cellulosae).